Here is a 24-residue protein sequence, read N- to C-terminus: Waglerin-4 (24 aa).

A disulfide bond links Cys11 and Cys15.

This sequence belongs to the waglerin family. As to quaternary structure, monomer. In terms of tissue distribution, expressed by the venom gland.

It localises to the secreted. Functionally, waglerin-2 selectively blocks the epsilon subunit of muscle nicotinic acetylcholine receptor (nAChR). Also has effects on rodent ionotropic GABA(A) receptors (GABR), since it potentiates I(GABA) in some neurons and depresses I(GABA) in others. In mice, it elicits tachypnea, ocular proptosis, rapid collapse and spasms, whereas no toxic effects on respiration and blood pressure are observed in rats. Waglerin-4 selectively blocks the epsilon subunit of muscle nicotinic acetylcholine receptor. It elicits tachypnea, ocular proptosis, rapid collapse and spasms in mice. It causes death by respiratory failure. The chain is Waglerin-4 from Tropidolaemus wagleri (Wagler's pit viper).